The primary structure comprises 460 residues: Probable lipid II flippase MurJ (460 aa).

A run of 11 helical transmembrane segments spans residues 4 to 24 (ILGAGVYSDIFFVAFKLPNLF), 50 to 70 (FASLVGLIFCGVLFMWCLLVA), 95 to 115 (IVAINFWYLLLVFITTFLGAL), 122 to 142 (FFASAYSASLLNLCMILALLI), 155 to 175 (LSYGVLLGGVAQILLHFYPLV), 228 to 248 (IASFLDTTIASFLASGSVSYL), 257 to 277 (LPLALFAIAISTALFPSIAIA), 292 to 312 (KAWFFLVGVLLLCSIGGIMLS), 336 to 356 (VFSLYLLGLLPFGLTKLFSLW), 366 to 386 (AAKISLISLFLGLAASLSLMP), and 428 to 448 (LVILFLACVEILLLLAFKSWV).

Belongs to the MurJ/MviN family.

The protein resides in the cell inner membrane. Its pathway is cell wall biogenesis; peptidoglycan biosynthesis. Involved in peptidoglycan biosynthesis. Transports lipid-linked peptidoglycan precursors from the inner to the outer leaflet of the cytoplasmic membrane. This Helicobacter pylori (strain J99 / ATCC 700824) (Campylobacter pylori J99) protein is Probable lipid II flippase MurJ.